The sequence spans 151 residues: UPF0178 protein GSU0171 (151 aa).

Belongs to the UPF0178 family.

In Geobacter sulfurreducens (strain ATCC 51573 / DSM 12127 / PCA), this protein is UPF0178 protein GSU0171.